We begin with the raw amino-acid sequence, 194 residues long: UPF0301 protein BQ03640 (194 aa).

Belongs to the UPF0301 (AlgH) family.

This chain is UPF0301 protein BQ03640, found in Bartonella quintana (strain Toulouse) (Rochalimaea quintana).